We begin with the raw amino-acid sequence, 1039 residues long: Beta-galactosidase (1039 aa).

2 residues coordinate substrate: N103 and D201. Residue D201 coordinates Na(+). Mg(2+)-binding residues include E415, H417, and E460. Substrate-binding positions include E460 and E536–H539. E460 acts as the Proton donor in catalysis. The active-site Nucleophile is the E536. N596 lines the Mg(2+) pocket. Na(+)-binding residues include F600 and N603. Residues N603 and W1012 each contribute to the substrate site.

The protein belongs to the glycosyl hydrolase 2 family. In terms of assembly, homotetramer. Requires Mg(2+) as cofactor. Na(+) is required as a cofactor.

The enzyme catalyses Hydrolysis of terminal non-reducing beta-D-galactose residues in beta-D-galactosides.. With respect to regulation, inhibited by zinc, copper and nickel ions. Activated by 2-mercaptoethanol and inhibited by EDTA in vitro. This Pseudoalteromonas haloplanktis (Alteromonas haloplanktis) protein is Beta-galactosidase (lacZ).